The following is a 2542-amino-acid chain: Probable polyketide synthase 41 (2542 aa).

A Ketosynthase family 3 (KS3) domain is found at 11 to 441; it reads CNKVAIIGIG…GSNCCLIVSS (431 aa). Catalysis depends on for beta-ketoacyl synthase activity residues C177, H318, and H360. Residues 628–661 are acyl/malonyl transferase; the sequence is GIKPSIIVGHSLGEISSSYCSGMIDLDTFCYLIY. Catalysis depends on S638, which acts as the For acyl/malonyl transferase activity. The tract at residues 926–1059 is N-terminal hotdog fold; that stretch reads INHLGISNSN…ANFQLFSRGP (134 aa). The region spanning 926-1231 is the PKS/mFAS DH domain; it reads INHLGISNSN…FKSTTKIKDP (306 aa). Catalysis depends on H959, which acts as the Proton acceptor; for dehydratase activity. The C-terminal hotdog fold stretch occupies residues 1083 to 1231; the sequence is NLTKLSKQEL…FKSTTKIKDP (149 aa). D1145 functions as the Proton donor; for dehydratase activity in the catalytic mechanism. The Carrier domain maps to 2459–2537; it reads NVELTVDQLI…SFIQLVKNSM (79 aa). Position 2496 is an O-(pantetheine 4'-phosphoryl)serine (S2496).

It depends on pantetheine 4'-phosphate as a cofactor.

Functionally, probable polyketide synthase. In Dictyostelium discoideum (Social amoeba), this protein is Probable polyketide synthase 41 (pks41).